A 326-amino-acid chain; its full sequence is Protein phosphatase 1 regulatory subunit SDS22 homolog (326 aa).

Positions 1–22 (MSNDKSAEVVVLPRENDEESKE) are disordered. LRR repeat units lie at residues 35 to 57 (DIDS…LTGF), 58 to 80 (PKIE…ISSL), 81 to 102 (VTLT…LESL), 103 to 126 (VNLV…KLTK), 128 to 146 (ETLY…LEAL), 147 to 170 (TQLK…HLVN), 172 to 190 (DELF…VETL), 191 to 212 (QKLS…VEQL), 213 to 236 (NNLK…PLTN), 238 to 256 (LLLD…VERL), 257 to 280 (ESLN…QLSK), and 281 to 304 (LKGL…QYRR).

Belongs to the SDS22 family.

It localises to the nucleus. In terms of biological role, regulatory subunit of protein phosphatase 1. This Caenorhabditis elegans protein is Protein phosphatase 1 regulatory subunit SDS22 homolog (sds-22).